We begin with the raw amino-acid sequence, 195 residues long: MIAVVDLGIGNLANVRKALGGVITSDPYAIEGAEKIVLPGVGNFGAVMEKLEPLRGVIIDAINDGKPLLGICLGLQLLFEGSEESPGKPGLGVFRGNVVRFQGVRVPHIGWNQVWQRKECPLFEGIKDGAYFYFVHSYYALPEEDVTVGVTDYESKGAKVVFTSAVCRDNVYAVQFHPEKSGRNGLRLLENFRRL.

Positions 1-195 (MIAVVDLGIG…LRLLENFRRL (195 aa)) constitute a Glutamine amidotransferase type-1 domain. Cysteine 72 acts as the Nucleophile in catalysis. Active-site residues include histidine 177 and glutamate 179.

As to quaternary structure, heterodimer of HisH and HisF.

The protein localises to the cytoplasm. The catalysed reaction is 5-[(5-phospho-1-deoxy-D-ribulos-1-ylimino)methylamino]-1-(5-phospho-beta-D-ribosyl)imidazole-4-carboxamide + L-glutamine = D-erythro-1-(imidazol-4-yl)glycerol 3-phosphate + 5-amino-1-(5-phospho-beta-D-ribosyl)imidazole-4-carboxamide + L-glutamate + H(+). It carries out the reaction L-glutamine + H2O = L-glutamate + NH4(+). The protein operates within amino-acid biosynthesis; L-histidine biosynthesis; L-histidine from 5-phospho-alpha-D-ribose 1-diphosphate: step 5/9. Its function is as follows. IGPS catalyzes the conversion of PRFAR and glutamine to IGP, AICAR and glutamate. The HisH subunit catalyzes the hydrolysis of glutamine to glutamate and ammonia as part of the synthesis of IGP and AICAR. The resulting ammonia molecule is channeled to the active site of HisF. The sequence is that of Imidazole glycerol phosphate synthase subunit HisH from Thermococcus kodakarensis (strain ATCC BAA-918 / JCM 12380 / KOD1) (Pyrococcus kodakaraensis (strain KOD1)).